Here is a 498-residue protein sequence, read N- to C-terminus: Probable cytosol aminopeptidase (498 aa).

Mn(2+) contacts are provided by Lys-263 and Asp-268. Lys-275 is a catalytic residue. Positions 286, 345, and 347 each coordinate Mn(2+). Arg-349 is an active-site residue.

Belongs to the peptidase M17 family. Requires Mn(2+) as cofactor.

The protein resides in the cytoplasm. The enzyme catalyses Release of an N-terminal amino acid, Xaa-|-Yaa-, in which Xaa is preferably Leu, but may be other amino acids including Pro although not Arg or Lys, and Yaa may be Pro. Amino acid amides and methyl esters are also readily hydrolyzed, but rates on arylamides are exceedingly low.. It catalyses the reaction Release of an N-terminal amino acid, preferentially leucine, but not glutamic or aspartic acids.. Presumably involved in the processing and regular turnover of intracellular proteins. Catalyzes the removal of unsubstituted N-terminal amino acids from various peptides. The chain is Probable cytosol aminopeptidase from Rhodopseudomonas palustris (strain BisA53).